Consider the following 518-residue polypeptide: Ribonuclease Y (518 aa).

Residues 2–22 traverse the membrane as a helical segment; it reads GSIIISALLALVIGAVVGFFV. Positions 208-271 constitute a KH domain; sequence TVSVVNLPND…ETARIALDKL (64 aa). The HD domain occupies 334–427; it reads VLKHSVEVAF…VAAADALSAA (94 aa).

It belongs to the RNase Y family.

It is found in the cell membrane. In terms of biological role, endoribonuclease that initiates mRNA decay. The polypeptide is Ribonuclease Y (Geobacillus thermodenitrificans (strain NG80-2)).